The chain runs to 305 residues: UDP-3-O-acyl-N-acetylglucosamine deacetylase (305 aa).

Zn(2+) is bound by residues H79, H238, and D242. The Proton donor role is filled by H265.

The protein belongs to the LpxC family. It depends on Zn(2+) as a cofactor.

It carries out the reaction a UDP-3-O-[(3R)-3-hydroxyacyl]-N-acetyl-alpha-D-glucosamine + H2O = a UDP-3-O-[(3R)-3-hydroxyacyl]-alpha-D-glucosamine + acetate. It functions in the pathway glycolipid biosynthesis; lipid IV(A) biosynthesis; lipid IV(A) from (3R)-3-hydroxytetradecanoyl-[acyl-carrier-protein] and UDP-N-acetyl-alpha-D-glucosamine: step 2/6. Catalyzes the hydrolysis of UDP-3-O-myristoyl-N-acetylglucosamine to form UDP-3-O-myristoylglucosamine and acetate, the committed step in lipid A biosynthesis. The protein is UDP-3-O-acyl-N-acetylglucosamine deacetylase of Mannheimia succiniciproducens (strain KCTC 0769BP / MBEL55E).